We begin with the raw amino-acid sequence, 501 residues long: Ribose import ATP-binding protein RbsA (501 aa).

2 ABC transporter domains span residues 6–242 (LQLS…VGRK) and 253–495 (VHGQ…VGKK). 38–45 (GENGAGKS) lines the ATP pocket.

Belongs to the ABC transporter superfamily. Ribose importer (TC 3.A.1.2.1) family. The complex is composed of an ATP-binding protein (RbsA), two transmembrane proteins (RbsC) and a solute-binding protein (RbsB).

The protein resides in the cell inner membrane. It catalyses the reaction D-ribose(out) + ATP + H2O = D-ribose(in) + ADP + phosphate + H(+). Its function is as follows. Part of the ABC transporter complex RbsABC involved in ribose import. Responsible for energy coupling to the transport system. The sequence is that of Ribose import ATP-binding protein RbsA from Vibrio vulnificus (strain CMCP6).